Consider the following 128-residue polypeptide: Ribosome-binding factor A (128 aa).

It belongs to the RbfA family. Monomer. Binds 30S ribosomal subunits, but not 50S ribosomal subunits or 70S ribosomes.

It localises to the cytoplasm. In terms of biological role, one of several proteins that assist in the late maturation steps of the functional core of the 30S ribosomal subunit. Associates with free 30S ribosomal subunits (but not with 30S subunits that are part of 70S ribosomes or polysomes). Required for efficient processing of 16S rRNA. May interact with the 5'-terminal helix region of 16S rRNA. The protein is Ribosome-binding factor A of Rickettsia prowazekii (strain Madrid E).